The chain runs to 160 residues: Probable dihydroneopterin aldolase 3 (160 aa).

Residues glutamate 59, phenylalanine 91, and 110–111 (YE) contribute to the substrate site. Residue lysine 137 is the Proton donor/acceptor of the active site.

Belongs to the DHNA family. As to quaternary structure, homooctamer. Forms a hollow cylinder assembled from two ring-shaped tetramers. In terms of tissue distribution, expressed at very low levels in siliques.

The enzyme catalyses 7,8-dihydroneopterin = 6-hydroxymethyl-7,8-dihydropterin + glycolaldehyde. It functions in the pathway cofactor biosynthesis; tetrahydrofolate biosynthesis; 2-amino-4-hydroxy-6-hydroxymethyl-7,8-dihydropteridine diphosphate from 7,8-dihydroneopterin triphosphate: step 3/4. In terms of biological role, catalyzes the conversion of 7,8-dihydroneopterin into 6-hydroxymethyl-7,8-dihydropterin, a biosynthetic precursor of the vitamin tetrahydrofolate. Can use L-threo-dihydroneopterin and D-erythro-dihydroneopterin as substrates for the formation of 6-hydroxymethyldihydropterin, but it can also catalyze the epimerization of carbon 2' of dihydroneopterin and dihydromonapterin. The chain is Probable dihydroneopterin aldolase 3 from Arabidopsis thaliana (Mouse-ear cress).